Reading from the N-terminus, the 692-residue chain is 5-taurinomethyluridine-[tRNA] synthase subunit MTO1, mitochondrial (692 aa).

The N-terminal 25 residues, Met1–Leu25, are a transit peptide targeting the mitochondrion. Residues Gly43–Gly48, Val155, Ser218, and Gln407 each bind FAD. Lys508 carries the N6-methyllysine modification.

The protein belongs to the MnmG family. Homodimer; forms a dimer in the presence of potassium. Interacts with GTPBP3; forms the GTPBP3-MTO1 complex composed of homodimers of GTPBP3 and MTO1. It depends on FAD as a cofactor.

It is found in the mitochondrion. It catalyses the reaction 5,10-methylenetetrahydrofolate + uridine(34) in tRNA + taurine + GTP + A + H2O = 5-taurinomethyluridine(34) in tRNA + 7,8-dihydrofolate + GDP + AH2 + phosphate + H(+). In terms of biological role, component of the GTPBP3-MTO1 complex that catalyzes the 5-taurinomethyluridine (taum(5)U) modification at the 34th wobble position (U34) of mitochondrial tRNAs (mt-tRNAs), which plays a role in mt-tRNA decoding and mitochondrial translation. Taum(5)U formation on mammalian mt-tRNA requires the presence of both GTPBP3-mediated GTPase activity and MTO1 catalytic activity. This Pongo abelii (Sumatran orangutan) protein is 5-taurinomethyluridine-[tRNA] synthase subunit MTO1, mitochondrial (MTO1).